A 1544-amino-acid chain; its full sequence is Telomerase-binding protein EST1A (1544 aa).

Composition is skewed to basic and acidic residues over residues 25 to 48, 108 to 141, and 177 to 209; these read HGDD…KRPD, LNDH…KIIE, and GASK…EEKR. 4 disordered regions span residues 25 to 503, 536 to 573, 936 to 964, and 976 to 996; these read HGDD…RGRG, RGRG…SQHQ, QVER…GEDA, and VSGT…QDGE. Polar residues predominate over residues 223 to 244; it reads SVETPSANKTENAVENISNKVS. Basic and acidic residues-rich tracts occupy residues 249–273, 283–330, and 338–369; these read ETVE…EGRK, MGED…EGRK, and EASR…DSKR. Positions 389–400 are enriched in low complexity; the sequence is TYSTSSASSGTS. Composition is skewed to basic and acidic residues over residues 421 to 432 and 458 to 495; these read TLERATGQREFV and VWER…EQAS. Over residues 536 to 545 the composition is skewed to gly residues; sequence RGRGGRGGGT. Positions 547–558 are enriched in basic and acidic residues; the sequence is RLWDPNNPDKKP. The span at 562 to 573 shows a compositional bias: low complexity; that stretch reads SSQQSQHASQHQ. Residues 936 to 947 are compositionally biased toward basic and acidic residues; that stretch reads QVERRLKQDSDG. Positions 976–986 are enriched in polar residues; sequence VSGTSRPTGSE. The PINc domain maps to 1369 to 1522; the sequence is FYLVPDTNGF…LLTDDRNLRV (154 aa).

As to quaternary structure, may form homooligomers. Associated component of the telomerase holoenzyme complex. Requires Mn(2+) as cofactor.

Its subcellular location is the nucleus. It is found in the nucleolus. It localises to the chromosome. The protein localises to the telomere. The protein resides in the cytoplasm. Its subcellular location is the cytosol. Component of the telomerase ribonucleoprotein (RNP) complex that is essential for the replication of chromosome termini. Required for normal embryonic development. Its function is as follows. Plays a role in nonsense-mediated mRNA decay. The sequence is that of Telomerase-binding protein EST1A (smg6) from Danio rerio (Zebrafish).